We begin with the raw amino-acid sequence, 405 residues long: Mitochondrial outer membrane protein SLC25A46 (405 aa).

The disordered stretch occupies residues 1-77 (MTSRRPDSFE…PDEAQSAAPP (77 aa)). Residues 22-37 (FSGGYSGRSFNNSSSS) show a composition bias toward low complexity. A Solcar 1 repeat occupies 80-171 (QLNRFAGFGI…GIISECTPLP (92 aa)). 6 consecutive transmembrane segments (helical) span residues 87-107 (FGIG…CIVF), 151-171 (FVVQ…TPLP), 183-203 (VVGH…FYSA), 242-262 (LLPL…HYII), 302-322 (FPEL…LFPL), and 371-391 (MGFY…ATVL). The stretch at 299-401 (DAYFPELMAS…QITKMIYSTL (103 aa)) is one Solcar 2 repeat.

It belongs to the mitochondrial carrier (TC 2.A.29) family.

It localises to the mitochondrion outer membrane. Functionally, transmembrane protein of the mitochondrial outer membrane that controls mitochondrial organization. May regulate the biogenesis and dynamics of mitochondrial cristae, the inwards folds of the inner mitochondrial membrane. Could regulate mitochondrial lipid homeostasis and thereby mitochondrial fission. This chain is Mitochondrial outer membrane protein SLC25A46 (slc25a46), found in Danio rerio (Zebrafish).